The primary structure comprises 518 residues: MECDLMETDILESLEDLGYKGPLLEDGALSQAVSAGASSPEFTKLCAWLVSELRVLCKLEENVQATNSPSEAEEFQLEVSGLLGEMNCPYLSLTSGDVTKRLLIQKNCLLLLTYLISELEAARMLCVNAPPKKAQEGGGSEVFQELEGICIALGMSKPPANITMFQFFSGIEKKLKETLAKVPPNHVGKPLLKKPMGPAHWEKIEAINQAIANEYEVRRKLLIKRLDVTVQSFGWSDRAKSQTEKLAKVYQPKRSVLSPKSTISVAHLLAARQDLSKILRTSSGSIGEKTACAINKVLMGRVPDRGGRPNEIEPPPPEMPPWQKRQDGPQQQTGGRGGGRGGYEHSSYGGRGGHEQGGGRGGRGGYDHGGRGGGRGNKHQGGWTDGGSGGGGGYQDGGYRDSGFQPGGYHGGHSSGGYQGGGYGGFQTSSSYTGSGYQGGGYQQDNRYQDGGHHGDRGGGRGGRGGRGGRGGRAGQGGGWGGRGSQNYHQGGQFEQHFQHGGYQYNHSGFGQGRHYTS.

2 disordered regions span residues 300–415 (GRVP…GHSS) and 434–518 (GSGY…HYTS). A compositionally biased stretch (basic and acidic residues) spans 302–311 (VPDRGGRPNE). 3 stretches are compositionally biased toward gly residues: residues 349–364 (GGRGGHEQGGGRGGRG), 383–396 (WTDGGSGGGGGYQD), and 405–415 (QPGGYHGGHSS). The span at 447-459 (RYQDGGHHGDRGG) shows a compositional bias: basic and acidic residues. Residues 460 to 484 (GRGGRGGRGGRGGRAGQGGGWGGRG) are compositionally biased toward gly residues. Residues 488–504 (YHQGGQFEQHFQHGGYQ) show a composition bias toward low complexity. Residues 505-518 (YNHSGFGQGRHYTS) show a composition bias toward polar residues.

The protein belongs to the FAM98 family. Interacts (via N- and C-terminus) with DDX1. Interacts (via N- and C-terminus) with C14orf166. Interacts with FAM98B. Interacts with PLEKHM1 (via N- and C-terminus).

Positively stimulates PRMT1-induced protein arginine methylation. Involved in skeletal homeostasis. Positively regulates lysosome peripheral distribution and ruffled border formation in osteoclasts. The sequence is that of Protein FAM98A from Pongo abelii (Sumatran orangutan).